A 164-amino-acid polypeptide reads, in one-letter code: ATP synthase subunit b (164 aa).

Residues 5 to 25 (IGELIGNFILVAGSFLLLIVL) traverse the membrane as a helical segment.

It belongs to the ATPase B chain family. F-type ATPases have 2 components, F(1) - the catalytic core - and F(0) - the membrane proton channel. F(1) has five subunits: alpha(3), beta(3), gamma(1), delta(1), epsilon(1). F(0) has three main subunits: a(1), b(2) and c(10-14). The alpha and beta chains form an alternating ring which encloses part of the gamma chain. F(1) is attached to F(0) by a central stalk formed by the gamma and epsilon chains, while a peripheral stalk is formed by the delta and b chains.

The protein localises to the cell membrane. In terms of biological role, f(1)F(0) ATP synthase produces ATP from ADP in the presence of a proton or sodium gradient. F-type ATPases consist of two structural domains, F(1) containing the extramembraneous catalytic core and F(0) containing the membrane proton channel, linked together by a central stalk and a peripheral stalk. During catalysis, ATP synthesis in the catalytic domain of F(1) is coupled via a rotary mechanism of the central stalk subunits to proton translocation. Functionally, component of the F(0) channel, it forms part of the peripheral stalk, linking F(1) to F(0). This chain is ATP synthase subunit b, found in Streptococcus gordonii (strain Challis / ATCC 35105 / BCRC 15272 / CH1 / DL1 / V288).